Reading from the N-terminus, the 396-residue chain is MAKSKFERTKPHVNVGTIGHVDHGKTTLTAAITTILSSKFGGEAKAYDQIDAAPEEKARGITINTAHVEYETANRHYAHVDCPGHADYVKNMITGAAQMDGAILVCSAADGPMPQTREHILLARQVGVPYIIVFLNKCDMVDDAELLELVEMEVRELLDKYEFPGDATPIVHGSAKLALEGDKGELGEQAIMKLAEALDSYIPTPERAVDGAFLMPVEDVFSISGRGTVVTGRVERGIIKVGEEIEIVGISATQKTTCTGVEMFRKLLDQGQAGDNVGILLRGTKREDVQRGQVLCKPGSVKPHTHFTAEIYVLSKEEGGRHTPFFNNYRPQFYFRTTDVTGAVELPKDKEMVMPGDNVSITVKLINPIAMEEGLRFAIREGGRTVGAGVVAKIIE.

The 197-residue stretch at 10 to 206 folds into the tr-type G domain; that stretch reads KPHVNVGTIG…ALDSYIPTPE (197 aa). The tract at residues 19–26 is G1; sequence GHVDHGKT. Position 19-26 (19-26) interacts with GTP; it reads GHVDHGKT. Threonine 26 provides a ligand contact to Mg(2+). The G2 stretch occupies residues 60–64; that stretch reads GITIN. Residues 81 to 84 form a G3 region; the sequence is DCPG. GTP is bound by residues 81-85 and 136-139; these read DCPGH and NKCD. Residues 136–139 are G4; it reads NKCD. Residues 174 to 176 are G5; that stretch reads SAK.

It belongs to the TRAFAC class translation factor GTPase superfamily. Classic translation factor GTPase family. EF-Tu/EF-1A subfamily. In terms of assembly, monomer.

It localises to the cytoplasm. The enzyme catalyses GTP + H2O = GDP + phosphate + H(+). Its function is as follows. GTP hydrolase that promotes the GTP-dependent binding of aminoacyl-tRNA to the A-site of ribosomes during protein biosynthesis. In Methylibium petroleiphilum (strain ATCC BAA-1232 / LMG 22953 / PM1), this protein is Elongation factor Tu.